The sequence spans 178 residues: MSGGKYVDSEGHLYTVPIREQGNIYKPNNKAMADEVNEKQVYDAHTKEIDLVNRDPKHLNDDVVKIDFEDVIAEPEGTHSFDGIWKASFTTFTVTKYWFYRLLSTIFGIPMALIWGIYFAILSFLHIWAVVPCIKSFLIEIQCISRVYSIYVHTFCDPLFEAIGKIFSNVRISMQKEI.

N-acetylserine is present on Ser-2. Position 2 is a phosphoserine (Ser-2). A required for homooligomerization region spans residues 2–94 (SGGKYVDSEG…WKASFTTFTV (93 aa)). Residues 2-104 (SGGKYVDSEG…TKYWFYRLLS (103 aa)) are Cytoplasmic-facing. The residue at position 5 (Lys-5) is an N6-acetyllysine; alternate. Residue Lys-5 forms a Glycyl lysine isopeptide (Lys-Gly) (interchain with G-Cter in ubiquitin); alternate linkage. Phosphotyrosine is present on Tyr-6. Ser-9 bears the Phosphoserine mark. Phosphotyrosine; by ABL1 is present on Tyr-14. Tyr-25 is subject to Phosphotyrosine. Residues Lys-26, Lys-30, Lys-39, Lys-47, and Lys-57 each participate in a glycyl lysine isopeptide (Lys-Gly) (interchain with G-Cter in ubiquitin) cross-link. Residues 82–94 (DGIWKASFTTFTV) are interaction with CAVIN3. The helical intramembrane region spans 105–125 (TIFGIPMALIWGIYFAILSFL). Over 126–178 (HIWAVVPCIKSFLIEIQCISRVYSIYVHTFCDPLFEAIGKIFSNVRISMQKEI) the chain is Cytoplasmic. An interacts with SPRY1, SPRY2, SPRY3 and SPRY4 region spans residues 131-142 (VPCIKSFLIEIQ). 3 S-palmitoyl cysteine lipidation sites follow: Cys-133, Cys-143, and Cys-156. An interacts with SPRY1, SPRY2, and SPRY4 region spans residues 149–160 (SIYVHTFCDPLF). Residues 167–178 (FSNVRISMQKEI) form an interacts with SPRY1, SPRY2, SPRY3 and SPRY4 region.

Belongs to the caveolin family. As to quaternary structure, homooligomer. Interacts with GLIPR2. Interacts with NOSTRIN. Interacts with SNAP25 and STX1A. Interacts (via the N-terminus) with DPP4; the interaction is direct. Interacts with CTNNB1, CDH1 and JUP. Interacts with PACSIN2; this interaction induces membrane tubulation. Interacts with SLC7A9. Interacts with BMX and BTK. Interacts with TGFBR1. Interacts with CAVIN3 (via leucine-zipper domain) in a cholesterol-sensitive manner. Interacts with CAVIN1. Interacts with EHD2 in a cholesterol-dependent manner. Forms a ternary complex with UBXN6 and VCP; mediates CAV1 targeting to lysosomes for degradation. Interacts with ABCG1; this interaction regulates ABCG1-mediated cholesterol efflux. Interacts with NEU3; this interaction enhances NEU3 sialidase activity within caveola. Interacts (via C-terminus) with SPRY1, SPRY2 (via C-terminus), SPRY3, and SPRY4. Interacts with IGFBP5; this interaction allows trafficking of IGFBP5 from the plasma membrane to the nucleus. In terms of processing, phosphorylated at Tyr-14 by ABL1 in response to oxidative stress. Ubiquitinated. Undergo monoubiquitination and multi- and/or polyubiquitination. Monoubiquitination of N-terminal lysines promotes integration in a ternary complex with UBXN6 and VCP which promotes oligomeric CAV1 targeting to lysosomes for degradation. Ubiquitinated by ZNRF1; leading to degradation and modulation of the TLR4-mediated immune response.

It localises to the golgi apparatus membrane. The protein localises to the cell membrane. It is found in the membrane. Its subcellular location is the caveola. The protein resides in the membrane raft. May act as a scaffolding protein within caveolar membranes. Forms a stable heterooligomeric complex with CAV2 that targets to lipid rafts and drives caveolae formation. Mediates the recruitment of CAVIN proteins (CAVIN1/2/3/4) to the caveolae. Interacts directly with G-protein alpha subunits and can functionally regulate their activity. Involved in the costimulatory signal essential for T-cell receptor (TCR)-mediated T-cell activation. Its binding to DPP4 induces T-cell proliferation and NF-kappa-B activation in a T-cell receptor/CD3-dependent manner. Recruits CTNNB1 to caveolar membranes and may regulate CTNNB1-mediated signaling through the Wnt pathway. Negatively regulates TGFB1-mediated activation of SMAD2/3 by mediating the internalization of TGFBR1 from membrane rafts leading to its subsequent degradation. Binds 20(S)-hydroxycholesterol (20(S)-OHC). This is Caveolin-1 (CAV1) from Oryctolagus cuniculus (Rabbit).